The following is a 250-amino-acid chain: Probable transcriptional regulatory protein DIP1378 (250 aa).

A disordered region spans residues 1–22; sequence MSGHSKWATTKHKKAANDAKRG.

It belongs to the TACO1 family.

It is found in the cytoplasm. This is Probable transcriptional regulatory protein DIP1378 from Corynebacterium diphtheriae (strain ATCC 700971 / NCTC 13129 / Biotype gravis).